Consider the following 516-residue polypeptide: Immunoglobulin G-binding protein A (516 aa).

An N-terminal signal peptide occupies residues 1-36; that stretch reads MKKKNIYSIRKLGVGIASVTLGTLLISGGVTPAANA. Residues 7-18 carry the YSIRK-G/S signaling motif motif; that stretch reads YSIRKLGVGIAS. One copy of the Immunoglobulin-binding region E repeat lies at 37–92; sequence AQHDEAQQNAFYQVLNMPNLNADQRNGFIQSLKDDPSQSANVLGEAQKLNDSQAPK. An Immunoglobulin-binding region D repeat occupies 93–153; that stretch reads ADAQQNNFNK…KKLNESQAPK (61 aa). One copy of the Immunoglobulin-binding region A repeat lies at 154 to 211; it reads ADNNFNKEQQNAFYEILNMPNLNEEQRNGFIQSLKDDPSQSANLLSEAKKLNESQAPK. The Immunoglobulin-binding region B repeat unit spans residues 212–269; the sequence is ADNKFNKEQQNAFYEILHLPNLNEEQRNGFIQSLKDDPSQSANLLAEAKKLNDAQAPK. One copy of the Immunoglobulin-binding region C repeat lies at 270–327; that stretch reads ADNKFNKEQQNAFYEILHLPNLTEEQRNGFIQSLKDDPSVSKEILAEAKKLNDAQAPK. The segment covering 318–420 has biased composition (basic and acidic residues); sequence KKLNDAQAPK…GNKPGKEDGN (103 aa). Disordered stretches follow at residues 318–440 and 467–487; these read KKLN…ANGT and KKQP…ETGE. Tandem repeats lie at residues 333–340, 341–348, 349–356, 357–364, 365–372, 373–380, 381–388, 389–396, 397–404, 405–412, and 413–420. Residues 333–420 are 11 X 8 AA approximate tandem repeats; that stretch reads KPGKEDNNKP…GNKPGKEDGN (88 aa). The 45-residue stretch at 421–465 folds into the LysM domain; the sequence is GVHVVKPGDTVNDIAKANGTTADKIAADNKLADKNMIKPGQELVV. The LPXTG sorting signal signature appears at 482–486; the sequence is LPETG. The residue at position 485 (Thr-485) is a Pentaglycyl murein peptidoglycan amidated threonine. A propeptide spans 486–516 (removed by sortase A); that stretch reads GEENPFIGTTVFGGLSLALGAALLAGRRREL.

This sequence belongs to the immunoglobulin-binding protein SpA family. As to quaternary structure, interacts with host TNFRSF1A; this interaction leads to the stimulation of both surface expression and shedding of TNFRSF1A.

It localises to the secreted. It is found in the cell wall. Functionally, plays a role in the inhibition of the host innate and adaptive immune responses. Possesses five immunoglobulin-binding domains that capture both the fragment crystallizable region (Fc region) and the Fab region (part of Ig that identifies antigen) of immunoglobulins. In turn, Staphylococcus aureus is protected from phagocytic killing via inhibition of Ig Fc region. In addition, the host elicited B-cell response is prevented due to a decrease of antibody-secreting cell proliferation that enter the bone marrow, thereby decreasing long-term antibody production. Inhibits osteogenesis by preventing osteoblast proliferation and expression of alkaline phosphatase, type I collagen, osteopontin and osteocalcin. Acts directly as a pro-inflammatory factor in the lung through its ability to bind and activate tumor necrosis factor alpha receptor 1/TNFRSF1A. The protein is Immunoglobulin G-binding protein A (spa) of Staphylococcus aureus (strain NCTC 8325 / PS 47).